The chain runs to 481 residues: Proline--tRNA ligase (481 aa).

Belongs to the class-II aminoacyl-tRNA synthetase family. ProS type 3 subfamily. Homodimer.

The protein resides in the cytoplasm. It catalyses the reaction tRNA(Pro) + L-proline + ATP = L-prolyl-tRNA(Pro) + AMP + diphosphate. In terms of biological role, catalyzes the attachment of proline to tRNA(Pro) in a two-step reaction: proline is first activated by ATP to form Pro-AMP and then transferred to the acceptor end of tRNA(Pro). The protein is Proline--tRNA ligase of Saccharolobus islandicus (strain Y.N.15.51 / Yellowstone #2) (Sulfolobus islandicus).